We begin with the raw amino-acid sequence, 121 residues long: uncharacterized protein (121 aa).

2 disordered regions span residues 24-43 and 100-121; these read SGRT…GRGG and DHEN…TDQR.

This is an uncharacterized protein from Homo sapiens (Human).